Reading from the N-terminus, the 252-residue chain is Flagellar brake protein YcgR (252 aa).

The region spanning 123-238 (QRREFYRVPT…TLATVQKYIT (116 aa)) is the PilZ domain.

It belongs to the YcgR family. As to quaternary structure, monomer. Interacts with the flagellar basal bodies.

The protein localises to the bacterial flagellum basal body. Its function is as follows. Acts as a flagellar brake, regulating swimming and swarming in a bis-(3'-5') cyclic diguanylic acid (c-di-GMP)-dependent manner. Binds 1 c-di-GMP dimer per subunit. Increasing levels of c-di-GMP lead to decreased motility. In Janthinobacterium sp. (strain Marseille) (Minibacterium massiliensis), this protein is Flagellar brake protein YcgR.